We begin with the raw amino-acid sequence, 79 residues long: Conotoxin TsMSGL-2 (79 aa).

The signal sequence occupies residues 1–24 (MSGLGIMVLTLLLLVFMATSHQDA). The propeptide occupies 25–46 (GEKQATQRDAVNVRRRRSIAGR). 3 disulfides stabilise this stretch: Cys-52–Cys-64, Cys-56–Cys-73, and Cys-63–Cys-77. Leu-78 is subject to Leucine amide.

Belongs to the conotoxin O3 superfamily. Expressed by the venom duct.

It is found in the secreted. The protein is Conotoxin TsMSGL-2 of Conus tessulatus (Tessellate cone).